Consider the following 461-residue polypeptide: MEKDKKTWSGRFSEPVALLVQRYTASVGFDYRLAEYDIQGSFAHARMLAATNIIPQTDLEAIEKGLTQIWEEIKNGQFEWQLEQEDVHLNIERRLTALTGDAGKRLHTARSRNDQVATDIRLYLRAAIDEIIDLIYGLQYVLLDLAEQHAATIMPGFTHLQVAQPVSFGHHLLAYYEMLLRDGQRLQDCRKRVNQLPLGAAALAGTSYPIDREQVARELGFDDICHNSLDAVSDRDFAIEFCASAALIMMHLSRLSEELILWMSPAFGFIRIADRFCTGSSIMPQKKNPDVPELVRGKTGRINGHLVALLTLMKSQPLAYNKDNQEDKEPLFDTVDTLKDTLTIYADMLAGLQVNPQAMRQAALRGYATATDLADYLVKKGTPFRDAHETVAQAVRFAENKRCDLGELSLADLQQFSAIIEQDVFEVLTLEGSLQSRNHPGGTAPEQVRAAICRARSQLPD.

This sequence belongs to the lyase 1 family. Argininosuccinate lyase subfamily.

The protein resides in the cytoplasm. It catalyses the reaction 2-(N(omega)-L-arginino)succinate = fumarate + L-arginine. It functions in the pathway amino-acid biosynthesis; L-arginine biosynthesis; L-arginine from L-ornithine and carbamoyl phosphate: step 3/3. The chain is Argininosuccinate lyase from Nitrosomonas eutropha (strain DSM 101675 / C91 / Nm57).